The primary structure comprises 631 residues: 1,4-alpha-glucan branching enzyme GlgB (631 aa).

The Nucleophile role is filled by aspartate 309. Glutamate 362 acts as the Proton donor in catalysis.

It belongs to the glycosyl hydrolase 13 family. GlgB subfamily. Monomer.

It carries out the reaction Transfers a segment of a (1-&gt;4)-alpha-D-glucan chain to a primary hydroxy group in a similar glucan chain.. It participates in glycan biosynthesis; glycogen biosynthesis. Its function is as follows. Catalyzes the formation of the alpha-1,6-glucosidic linkages in glycogen by scission of a 1,4-alpha-linked oligosaccharide from growing alpha-1,4-glucan chains and the subsequent attachment of the oligosaccharide to the alpha-1,6 position. The polypeptide is 1,4-alpha-glucan branching enzyme GlgB (Marinobacter nauticus (strain ATCC 700491 / DSM 11845 / VT8) (Marinobacter aquaeolei)).